A 534-amino-acid chain; its full sequence is Arginine--tRNA ligase (534 aa).

The short motif at 120 to 130 (ANPTGFLHLGH) is the 'HIGH' region element.

This sequence belongs to the class-I aminoacyl-tRNA synthetase family. In terms of assembly, monomer.

It localises to the cytoplasm. The enzyme catalyses tRNA(Arg) + L-arginine + ATP = L-arginyl-tRNA(Arg) + AMP + diphosphate. This is Arginine--tRNA ligase from Mesomycoplasma hyopneumoniae (strain 7448) (Mycoplasma hyopneumoniae).